We begin with the raw amino-acid sequence, 832 residues long: MSLWGQPLQASPPLAVRQPPTASSGPSTSPPAGATLNRLPEPLLRRLSESLDRAPEGRGWRQLAELAGSRGRLRLSGLDLEQCSLKVLEPEGSPSLCLLKLMGEKGCTVTELSDFLQALEHTEVLPLLNPPGLKITVNPESKAVLAGQFVKLCCRATGHPFVQYQWFKMNKEIPYGNSSELVFNTVHVKDAGFYVCRVNNSSTFEFSQWSQLDVCDVAEVTDSFQGSMDGISESRLQICVEPRSQRLVPGSMLLLQCVAIGSPMPHYQWFKDESPLTHETKKHYTVPYVDIEHEGTYWCHVYNDRDSQDSKKAEVTIGRTDEAVECTEDELNNLGHPDNKEQTGQPLAKDKVALLIGNMSYWEHPKLKAPLVDVYELTNLLRQLDFKVVSLLDLTEYEMCNAVDEFLLLLDKGVYGLLYYAGHGYENFGNSFMVPVDAPNPYRSENCLCVQNILKLMQEKETGLNVFLLDMCRKRNDYDDTIPILDALKVTANIVFGYATCQGAEAFEIQHSGLANGIFMKFLKDRLLEDKKITVLLDEVAEDMGKCHLTKGRQALEIRSSLSEKRALTDPVQGAPCSAEALVRNLQWAKAHELPESMCLKFQCGVHIQLGFAAEFSNVMIIYTSIVHKPPEIIMCDAYVTDFPLDLDIDPKHANKGTPEETGSYLVSKDLPKHCLYTRLSSLQKLKEHLIFTVCLSYQYSGLEDTVEEKQEVNVGKPLIAKLDMHRGLGRKTCFQACRMPDEPYHSSTSTSAGAGHFHSSQDSFHDVYHSHLGNADSGMPPDRCHCSRTPHTFISNYPPHHYCQFGRSNVPVETTDEMPFSFSDRLMISEN.

The disordered stretch occupies residues 1–39 (MSLWGQPLQASPPLAVRQPPTASSGPSTSPPAGATLNRL). Ser2 bears the N-acetylserine mark. The segment covering 19-39 (PPTASSGPSTSPPAGATLNRL) has biased composition (low complexity). The 88-residue stretch at 45 to 132 (RRLSESLDRA…EVLPLLNPPG (88 aa)) folds into the Death domain. 2 Ig-like C2-type domains span residues 131–207 (PGLK…FEFS) and 218–314 (AEVT…KKAE). Ser141 carries the post-translational modification Phosphoserine. Cystine bridges form between Cys154–Cys196 and Cys257–Cys299. Residues 356 to 570 (IGNMSYWEHP…SLSEKRALTD (215 aa)) are caspase-like. The Nuclear export signal motif lies at 377–384 (LTNLLRQL). Residues His423 and Cys472 contribute to the active site.

This sequence belongs to the peptidase C14B family. Homooligomer; forms oligomers which bind to TRAF6. Forms a complex with CARD14 and MALT1; resulting in the formation of a CBM (CARD14-BCL10-MALT1) complex. Forms a complex with CARD11 and MALT1; resulting in the formation of a CBM (CARD11-BCL10-MALT1) complex. Forms a complex with CARD9 and MALT1; resulting in the formation of a CBM (CARD9-BCL10-MALT1) complex.

Its subcellular location is the cytoplasm. It is found in the perinuclear region. The protein resides in the nucleus. Its function is as follows. Protease that enhances BCL10-induced activation: acts via formation of CBM complexes that channel adaptive and innate immune signaling downstream of CARD domain-containing proteins (CARD9, CARD11 and CARD14) to activate NF-kappa-B and MAP kinase p38 pathways which stimulate expression of genes encoding pro-inflammatory cytokines and chemokines. Mediates BCL10 cleavage: MALT1-dependent BCL10 cleavage plays an important role in T-cell antigen receptor-induced integrin adhesion. Involved in the induction of T helper 17 cells (Th17) differentiation. Cleaves RC3H1 and ZC3H12A in response to T-cell receptor (TCR) stimulation which releases their cooperatively repressed targets to promote Th17 cell differentiation. Also mediates cleavage of N4BP1 in T-cells following TCR-mediated activation, leading to N4BP1 inactivation. May also have ubiquitin ligase activity: binds to TRAF6, inducing TRAF6 oligomerization and activation of its ligase activity. This Mus musculus (Mouse) protein is Mucosa-associated lymphoid tissue lymphoma translocation protein 1 homolog.